The primary structure comprises 436 residues: Peptidase B (436 aa).

Mn(2+) is bound by residues K201 and D206. K213 is a catalytic residue. D224, D283, and E285 together coordinate Mn(2+). Residue R287 is part of the active site.

This sequence belongs to the peptidase M17 family. Homohexamer. It depends on Mn(2+) as a cofactor.

It is found in the cytoplasm. The enzyme catalyses Release of an N-terminal amino acid, Xaa, from a peptide or arylamide. Xaa is preferably Glu or Asp but may be other amino acids, including Leu, Met, His, Cys and Gln.. Its function is as follows. Probably plays an important role in intracellular peptide degradation. In Pectobacterium atrosepticum (strain SCRI 1043 / ATCC BAA-672) (Erwinia carotovora subsp. atroseptica), this protein is Peptidase B.